A 78-amino-acid polypeptide reads, in one-letter code: Translation initiation factor IF-1 (78 aa).

The S1-like domain occupies 1–72 (MAKEAEMEFE…TRGRITYRKI (72 aa)).

Belongs to the IF-1 family. Component of the 30S ribosomal translation pre-initiation complex which assembles on the 30S ribosome in the order IF-2 and IF-3, IF-1 and N-formylmethionyl-tRNA(fMet); mRNA recruitment can occur at any time during PIC assembly.

The protein localises to the cytoplasm. One of the essential components for the initiation of protein synthesis. Stabilizes the binding of IF-2 and IF-3 on the 30S subunit to which N-formylmethionyl-tRNA(fMet) subsequently binds. Helps modulate mRNA selection, yielding the 30S pre-initiation complex (PIC). Upon addition of the 50S ribosomal subunit IF-1, IF-2 and IF-3 are released leaving the mature 70S translation initiation complex. This is Translation initiation factor IF-1 from Mesoplasma florum (strain ATCC 33453 / NBRC 100688 / NCTC 11704 / L1) (Acholeplasma florum).